Consider the following 55-residue polypeptide: Large ribosomal subunit protein bL33 (55 aa).

This sequence belongs to the bacterial ribosomal protein bL33 family.

This Aeromonas hydrophila subsp. hydrophila (strain ATCC 7966 / DSM 30187 / BCRC 13018 / CCUG 14551 / JCM 1027 / KCTC 2358 / NCIMB 9240 / NCTC 8049) protein is Large ribosomal subunit protein bL33.